The sequence spans 278 residues: 3-methyl-2-oxobutanoate hydroxymethyltransferase (278 aa).

Mg(2+) is bound by residues aspartate 44 and aspartate 83. 3-methyl-2-oxobutanoate contacts are provided by residues 44–45 (DS), aspartate 83, and lysine 112. Glutamate 114 is a Mg(2+) binding site. Glutamate 181 acts as the Proton acceptor in catalysis.

The protein belongs to the PanB family. Homodecamer; pentamer of dimers. The cofactor is Mg(2+).

Its subcellular location is the cytoplasm. It catalyses the reaction 3-methyl-2-oxobutanoate + (6R)-5,10-methylene-5,6,7,8-tetrahydrofolate + H2O = 2-dehydropantoate + (6S)-5,6,7,8-tetrahydrofolate. The protein operates within cofactor biosynthesis; (R)-pantothenate biosynthesis; (R)-pantoate from 3-methyl-2-oxobutanoate: step 1/2. Catalyzes the reversible reaction in which hydroxymethyl group from 5,10-methylenetetrahydrofolate is transferred onto alpha-ketoisovalerate to form ketopantoate. This is 3-methyl-2-oxobutanoate hydroxymethyltransferase from Roseiflexus sp. (strain RS-1).